The chain runs to 281 residues: Oxidase pynE (281 aa).

The protein belongs to the avfA family.

The protein operates within secondary metabolite biosynthesis. Functionally, oxidase; part of the gene cluster that mediates the biosynthesis of pyranonigrins, a family of antioxidative compounds. The first step of pyranonigrins biosynthesis is performed by the hybrid PKS-NRPS synthetase that condenses 6 malonyl-CoA units to an acetyl starter unit, to form a 1,3,5-trioxotetradecane-6,8-dienyl-ACP. The enoyl reductase (ER) domain of pynA is likely to be functional during the first two rounds of polyketide chain extension, to generate the saturated C-C bonds of the alkyl side chain. PynA subsequently forms the amide bond between the acyl chain and L-serine. Although pynA has a terminal reductase domain, it appears to require the thioesterase pynI for the release of the straight-chain intermediate from pynA via the formation of a tetramic acid pyranonigrin J. The methyltransferase pynC then coverts pyranonigrin J to pyranonigrin I via N-methylation. The FAD-dependent monooxygenase pynG catalyzes an epoxidation-mediated cyclization to form the dihydro-gamma-pyrone moiety, followed by pynD-catalyzed oxidation of the alcohol to the ketone and enolization to yield the characteristic tetramic acid-fused gamma-pyrone core of pyranonigrin H. Pyranonigrin H is substrate of pynH for dehydration-mediated exo-methylene formation from the serine side chain to produce pyranonigrin E, before the oxidase pynE reduces the exo-methylene of pyranonigrin E into a pendant methyl to form pyranonigrin G. The FAD-linked oxidoreductase pynB performs the reverse reaction and converts pyranonigrin G back to pyranonigrin E. The protein is Oxidase pynE of Aspergillus niger (strain ATCC MYA-4892 / CBS 513.88 / FGSC A1513).